The primary structure comprises 555 residues: Dihydroxy-acid dehydratase (555 aa).

Cys-46 provides a ligand contact to [2Fe-2S] cluster. Asp-78 is a binding site for Mg(2+). A [2Fe-2S] cluster-binding site is contributed by Cys-119. Positions 120 and 121 each coordinate Mg(2+). Residue Lys-121 is modified to N6-carboxylysine. Cys-191 contacts [2Fe-2S] cluster. Glu-442 serves as a coordination point for Mg(2+). Residue Ser-468 is the Proton acceptor of the active site.

This sequence belongs to the IlvD/Edd family. As to quaternary structure, homodimer. It depends on [2Fe-2S] cluster as a cofactor. Mg(2+) is required as a cofactor.

The catalysed reaction is (2R)-2,3-dihydroxy-3-methylbutanoate = 3-methyl-2-oxobutanoate + H2O. It catalyses the reaction (2R,3R)-2,3-dihydroxy-3-methylpentanoate = (S)-3-methyl-2-oxopentanoate + H2O. It participates in amino-acid biosynthesis; L-isoleucine biosynthesis; L-isoleucine from 2-oxobutanoate: step 3/4. The protein operates within amino-acid biosynthesis; L-valine biosynthesis; L-valine from pyruvate: step 3/4. Functions in the biosynthesis of branched-chain amino acids. Catalyzes the dehydration of (2R,3R)-2,3-dihydroxy-3-methylpentanoate (2,3-dihydroxy-3-methylvalerate) into 2-oxo-3-methylpentanoate (2-oxo-3-methylvalerate) and of (2R)-2,3-dihydroxy-3-methylbutanoate (2,3-dihydroxyisovalerate) into 2-oxo-3-methylbutanoate (2-oxoisovalerate), the penultimate precursor to L-isoleucine and L-valine, respectively. This chain is Dihydroxy-acid dehydratase, found in Thermus thermophilus (strain ATCC BAA-163 / DSM 7039 / HB27).